The following is a 286-amino-acid chain: D-tagatose-1,6-bisphosphate aldolase subunit KbaY (286 aa).

Asp82 serves as the catalytic Proton donor. Zn(2+) contacts are provided by His83 and His180. Gly181 is a dihydroxyacetone phosphate binding site. Position 208 (His208) interacts with Zn(2+). Residues 209 to 211 (GAS) and 230 to 233 (NVAT) contribute to the dihydroxyacetone phosphate site.

Belongs to the class II fructose-bisphosphate aldolase family. TagBP aldolase KbaY subfamily. In terms of assembly, homotetramer. Forms a complex with KbaZ. Zn(2+) is required as a cofactor.

It carries out the reaction D-tagatofuranose 1,6-bisphosphate = D-glyceraldehyde 3-phosphate + dihydroxyacetone phosphate. The protein operates within carbohydrate metabolism; D-tagatose 6-phosphate degradation; D-glyceraldehyde 3-phosphate and glycerone phosphate from D-tagatose 6-phosphate: step 2/2. Catalytic subunit of the tagatose-1,6-bisphosphate aldolase KbaYZ, which catalyzes the reversible aldol condensation of dihydroxyacetone phosphate (DHAP or glycerone-phosphate) with glyceraldehyde 3-phosphate (G3P) to produce tagatose 1,6-bisphosphate (TBP). Requires KbaZ subunit for full activity and stability. This chain is D-tagatose-1,6-bisphosphate aldolase subunit KbaY, found in Escherichia coli O127:H6 (strain E2348/69 / EPEC).